Here is a 1057-residue protein sequence, read N- to C-terminus: Nuclear RNAi defective-3 protein (1057 aa).

2 disordered regions span residues 1–89 (MDLL…GLSV) and 344–388 (LTNS…ERTV). Residues 17–30 (STAKKPATSASSTP) show a composition bias toward low complexity. Composition is skewed to basic and acidic residues over residues 67 to 81 (PKRE…DPKR) and 356 to 388 (GGRE…ERTV). Residues 387-500 (TVSHYQRQFQ…YPMELMSILP (114 aa)) enclose the PAZ domain. Residues 677-1001 (GIIAEKRPDM…LAKRGHNNYK (325 aa)) enclose the Piwi domain.

It localises to the cytoplasm. Its subcellular location is the nucleus. Transports small interfering RNAs (siRNAs) from the cytoplasm to the nucleus. Required for RNA interference (RNAi) in nuclei. Required for exogenous RNAi-induced H3K27 methylation. In Caenorhabditis elegans, this protein is Nuclear RNAi defective-3 protein (nrde-3).